The chain runs to 94 residues: Large ribosomal subunit protein bL31 (94 aa).

Residues Tyr-65–Ser-94 form a disordered region. Residues Ser-74–Ser-94 show a composition bias toward basic and acidic residues.

This sequence belongs to the bacterial ribosomal protein bL31 family. Type A subfamily. Part of the 50S ribosomal subunit.

Functionally, binds the 23S rRNA. This is Large ribosomal subunit protein bL31 from Prochlorococcus marinus (strain MIT 9211).